The sequence spans 287 residues: Survival motor neuron protein (287 aa).

Positions 1-28 (MGGGGGGFPEPEDSVLFRRGTGESDDSD) are disordered. Residues 9-40 (PEPEDSVLFRRGTGESDDSDVWDDTALIKAYD) are P1 (binding site for GEMIN2). Thr-21 bears the Phosphothreonine mark. Residues Ser-24 and Ser-27 each carry the phosphoserine modification. Residue Lys-47 forms a Glycyl lysine isopeptide (Lys-Gly) (interchain with G-Cter in SUMO2) linkage. 2 disordered regions span residues 51–86 (KNGD…PSKQ) and 149–221 (NAQE…PPPH). A compositionally biased stretch (basic residues) spans 64–77 (GTPKRKSAKNKSQR). Thr-65 bears the Phosphothreonine mark. Thr-80 carries the post-translational modification Phosphothreonine; by PKA. One can recognise a Tudor domain in the interval 86–146 (QWKVGDNCCA…LSPTSEVANI (61 aa)). The interval 92-204 (NCCAIWSEDG…MPRSGLGPGK (113 aa)) is required for interaction with RPP20/POP7. Over residues 149–160 (NAQENENESQIS) the composition is skewed to low complexity. Polar residues predominate over residues 167-179 (SSRSPLNKPNNIR). Lys-204 participates in a covalent cross-link: Glycyl lysine isopeptide (Lys-Gly) (interchain with G-Cter in SUMO2). Residues 211 to 221 (GPPPPPPPPPH) show a composition bias toward pro residues. Residues 234–261 (PPMIPPPPPICPDSLDDADALGSMLISW) form a P2 (binding site for SM B) region. The required for interaction with SYNCRIP stretch occupies residues 273–287 (GFKQSQKEGRYSHFN).

It belongs to the SMN family. As to quaternary structure, homooligomer; may form higher order homooligomers in the dimer to octamer range. Part of the core SMN complex that contains SMN1, GEMIN2/SIP1, DDX20/GEMIN3, GEMIN4, GEMIN5, GEMIN6, GEMIN7, GEMIN8 and STRAP/UNRIP. Part of the SMN-Sm complex that contains SMN1, GEMIN2/SIP1, DDX20/GEMIN3, GEMIN4, GEMIN5, GEMIN6, GEMIN7, GEMIN8, STRAP/UNRIP and the Sm proteins SNRPB, SNRPD1, SNRPD2, SNRPD3, SNRPE, SNRPF and SNRPG. Component of an import snRNP complex composed of KPNB1, RNUT1, SMN1 and ZNF259. Interacts with DDX20, FBL, NOLA1, RNUT1, SYNCRIP and with several spliceosomal snRNP core Sm proteins, including SNRPB, SNRPD1, SNRPD2, SNRPD3, SNRPE and ILF3. Interacts with GEMIN2; the interaction is direct. Interacts with GEMIN3; the interaction is direct. Interacts with GEMIN8; the interaction is direct. Interacts with SNRPB; the interaction is direct. Interacts (via Tudor domain) with SNRPD1 (via C-terminus); the interaction is direct. Interacts with SNRPD2; the interaction is direct. Interacts (via Tudor domain) with SNRPD3 (via C-terminus); the interaction is direct. Interacts with SNRPE; the interaction is direct. Interacts with OSTF1, LSM10, LSM11 and RPP20/POP7. Interacts (via C-terminal region) with ZPR1 (via C-terminal region). Interacts (via Tudor domain) with COIL. Interacts with SETX; recruits SETX to POLR2A. Interacts with POLR2A (via the C-terminal domain (CTD)). Interacts with PRMT5. Interacts with XRN2. Interacts (via C-terminus) with FMR1 (via C-terminus); the interaction is direct and occurs in a RNA-independent manner. Interacts (via Tudor domain) with SF3B2 ('Arg-508'-methylated form). Interacts with WRAP53/TCAB1. Interacts (via Tudor domain) with ELAVL4 in an RNA-independent manner; the interaction is required for localization of ELAVL4 to RNA granules. Interacts with FRG1.

The protein resides in the nucleus. It localises to the gem. Its subcellular location is the cajal body. It is found in the cytoplasm. The protein localises to the cytoplasmic granule. The protein resides in the perikaryon. It localises to the cell projection. Its subcellular location is the neuron projection. It is found in the axon. The protein localises to the myofibril. The protein resides in the sarcomere. It localises to the z line. Its function is as follows. The SMN complex catalyzes the assembly of small nuclear ribonucleoproteins (snRNPs), the building blocks of the spliceosome, and thereby plays an important role in the splicing of cellular pre-mRNAs. Most spliceosomal snRNPs contain a common set of Sm proteins SNRPB, SNRPD1, SNRPD2, SNRPD3, SNRPE, SNRPF and SNRPG that assemble in a heptameric protein ring on the Sm site of the small nuclear RNA to form the core snRNP (Sm core). In the cytosol, the Sm proteins SNRPD1, SNRPD2, SNRPE, SNRPF and SNRPG are trapped in an inactive 6S pICln-Sm complex by the chaperone CLNS1A that controls the assembly of the core snRNP. To assemble core snRNPs, the SMN complex accepts the trapped 5Sm proteins from CLNS1A forming an intermediate. Binding of snRNA inside 5Sm ultimately triggers eviction of the SMN complex, thereby allowing binding of SNRPD3 and SNRPB to complete assembly of the core snRNP. Within the SMN complex, SMN1 acts as a structural backbone and together with GEMIN2 it gathers the Sm complex subunits. Ensures the correct splicing of U12 intron-containing genes that may be important for normal motor and proprioceptive neurons development. Also required for resolving RNA-DNA hybrids created by RNA polymerase II, that form R-loop in transcription terminal regions, an important step in proper transcription termination. May also play a role in the metabolism of small nucleolar ribonucleoprotein (snoRNPs). In Bos taurus (Bovine), this protein is Survival motor neuron protein (SMN1).